Consider the following 872-residue polypeptide: Tegument protein UL47 homolog (872 aa).

Positions 1–206 (MDQHHGVRGG…ENDTEVISDD (206 aa)) are disordered. The Nuclear localization signal motif lies at 13-33 (IRRPRRSIETRSHPFRAAGNT). Residues 31–41 (GNTQRTYSTPR) are compositionally biased toward polar residues. 2 stretches are compositionally biased toward low complexity: residues 66-80 (ESST…PSTS) and 91-101 (DDAPAQPQAPR). Composition is skewed to acidic residues over residues 110-134 (PEED…EEDQ) and 177-204 (AEEE…EVIS).

The protein belongs to the alphaherpesvirinae HHV-1 UL47 family. In terms of assembly, interacts with US3 kinase. Interacts with UL31 and UL34; these interactions seem important for efficient virion nuclear egress. Interacts with UL41/VHS. Phosphorylated by US3. This phosphorylation is required for proper nuclear localization. Post-translationally, O-glycosylated.

It is found in the virion tegument. Its subcellular location is the host nucleus. The protein resides in the host cytoplasm. Functionally, tegument protein that can bind to various RNA transcripts. Plays a role in the attenuation of selective viral and cellular mRNA degradation by modulating the activity of host shutoff RNase UL41/VHS. Also plays a role in the primary envelopment of virions in the perinuclear space, probably by interacting with two nuclear egress proteins UL31 and UL34. The sequence is that of Tegument protein UL47 homolog (13) from Equus caballus (Horse).